A 527-amino-acid chain; its full sequence is Anthranilate synthase component 1 1 (527 aa).

Position 52 (Ser52) interacts with L-tryptophan. Residues 53–72 (AEKTPASDPDGAFTPDTTTE) are disordered. 298–300 (PYM) is an L-tryptophan binding site. 333 to 334 (GT) is a binding site for chorismate. Glu360 serves as a coordination point for Mg(2+). Residues Tyr448, Arg468, 486–488 (GAG), and Gly488 contribute to the chorismate site. Glu501 provides a ligand contact to Mg(2+).

Belongs to the anthranilate synthase component I family. Tetramer of two components I and two components II. Mg(2+) is required as a cofactor.

The catalysed reaction is chorismate + L-glutamine = anthranilate + pyruvate + L-glutamate + H(+). The protein operates within amino-acid biosynthesis; L-tryptophan biosynthesis; L-tryptophan from chorismate: step 1/5. This is Anthranilate synthase component 1 1 (trpE1) from Halobacterium salinarum (strain ATCC 700922 / JCM 11081 / NRC-1) (Halobacterium halobium).